The primary structure comprises 266 residues: Dihydropteroate synthase (266 aa).

The 249-residue stretch at 12-260 (AAIMGILNVT…DVKANQDIVA (249 aa)) folds into the Pterin-binding domain. Residue N19 coordinates Mg(2+). Residues T59, D93, N112, D176, K212, and 248–250 (RVH) each bind (7,8-dihydropterin-6-yl)methyl diphosphate.

Belongs to the DHPS family. In terms of assembly, homodimer or homotrimer. Mg(2+) serves as cofactor.

The catalysed reaction is (7,8-dihydropterin-6-yl)methyl diphosphate + 4-aminobenzoate = 7,8-dihydropteroate + diphosphate. It participates in cofactor biosynthesis; tetrahydrofolate biosynthesis; 7,8-dihydrofolate from 2-amino-4-hydroxy-6-hydroxymethyl-7,8-dihydropteridine diphosphate and 4-aminobenzoate: step 1/2. Its function is as follows. Catalyzes the condensation of para-aminobenzoate (pABA) with 6-hydroxymethyl-7,8-dihydropterin diphosphate (DHPt-PP) to form 7,8-dihydropteroate (H2Pte), the immediate precursor of folate derivatives. The polypeptide is Dihydropteroate synthase (folP) (Streptococcus pyogenes serotype M3 (strain ATCC BAA-595 / MGAS315)).